The primary structure comprises 184 residues: Large ribosomal subunit protein uL6 (184 aa).

The protein belongs to the universal ribosomal protein uL6 family. In terms of assembly, part of the 50S ribosomal subunit.

In terms of biological role, this protein binds to the 23S rRNA, and is important in its secondary structure. It is located near the subunit interface in the base of the L7/L12 stalk, and near the tRNA binding site of the peptidyltransferase center. The chain is Large ribosomal subunit protein uL6 from Pseudothermotoga lettingae (strain ATCC BAA-301 / DSM 14385 / NBRC 107922 / TMO) (Thermotoga lettingae).